The chain runs to 120 residues: Small ribosomal subunit protein eS24 (120 aa).

A disordered region spans residues 101–120 (RDAGTKQKKGGSKGGQGAKG).

Belongs to the eukaryotic ribosomal protein eS24 family.

The chain is Small ribosomal subunit protein eS24 from Saccharolobus solfataricus (strain ATCC 35092 / DSM 1617 / JCM 11322 / P2) (Sulfolobus solfataricus).